We begin with the raw amino-acid sequence, 395 residues long: Elongation factor Ts, mitochondrial (395 aa).

The transit peptide at 1 to 63 (MAFARAVRRP…RGFGNFIRSF (63 aa)) directs the protein to the mitochondrion.

The protein belongs to the EF-Ts family.

It localises to the mitochondrion. Associates with the EF-Tu.GDP complex and induces the exchange of GDP to GTP. It remains bound to the aminoacyl-tRNA.EF-Tu.GTP complex up to the GTP hydrolysis stage on the ribosome. The polypeptide is Elongation factor Ts, mitochondrial (Arabidopsis thaliana (Mouse-ear cress)).